The following is a 420-amino-acid chain: Exodeoxyribonuclease 7 large subunit (420 aa).

This sequence belongs to the XseA family. Heterooligomer composed of large and small subunits.

The protein resides in the cytoplasm. The enzyme catalyses Exonucleolytic cleavage in either 5'- to 3'- or 3'- to 5'-direction to yield nucleoside 5'-phosphates.. Bidirectionally degrades single-stranded DNA into large acid-insoluble oligonucleotides, which are then degraded further into small acid-soluble oligonucleotides. This chain is Exodeoxyribonuclease 7 large subunit, found in Helicobacter pylori (strain P12).